Reading from the N-terminus, the 493-residue chain is Adenylyltransferase and sulfurtransferase uba4 (493 aa).

ATP contacts are provided by residues glycine 99, aspartate 120, 127–131 (SNLHR), lysine 144, and 188–189 (DN). Cysteine 237 and cysteine 240 together coordinate Zn(2+). Residue cysteine 254 is the Glycyl thioester intermediate; for adenylyltransferase activity of the active site. Residues cysteine 316 and cysteine 319 each coordinate Zn(2+). Residues 376–491 (INKEPTIIDV…WREQIDPDWP (116 aa)) enclose the Rhodanese domain. The Cysteine persulfide intermediate; for sulfurtransferase activity role is filled by cysteine 446.

It in the N-terminal section; belongs to the HesA/MoeB/ThiF family. UBA4 subfamily. Zn(2+) is required as a cofactor.

The protein resides in the cytoplasm. The protein localises to the cytosol. The catalysed reaction is [molybdopterin-synthase sulfur-carrier protein]-C-terminal Gly-Gly + ATP + H(+) = [molybdopterin-synthase sulfur-carrier protein]-C-terminal Gly-Gly-AMP + diphosphate. It catalyses the reaction [molybdopterin-synthase sulfur-carrier protein]-C-terminal Gly-Gly-AMP + S-sulfanyl-L-cysteinyl-[cysteine desulfurase] + AH2 = [molybdopterin-synthase sulfur-carrier protein]-C-terminal-Gly-aminoethanethioate + L-cysteinyl-[cysteine desulfurase] + A + AMP + 2 H(+). It participates in tRNA modification; 5-methoxycarbonylmethyl-2-thiouridine-tRNA biosynthesis. Its pathway is cofactor biosynthesis; molybdopterin biosynthesis. Plays a central role in 2-thiolation of mcm(5)S(2)U at tRNA wobble positions of cytosolic tRNA(Lys), tRNA(Glu) and tRNA(Gln). Also essential during biosynthesis of the molybdenum cofactor. Acts by mediating the C-terminal thiocarboxylation of sulfur carriers urm1 and mocs2a. Its N-terminus first activates urm1 and mocs2a as acyl-adenylates (-COAMP), then the persulfide sulfur on the catalytic cysteine is transferred to urm1 and mocs2a to form thiocarboxylation (-COSH) of their C-terminus. The reaction probably involves hydrogen sulfide that is generated from the persulfide intermediate and that acts as a nucleophile towards urm1 and mocs2a. Subsequently, a transient disulfide bond is formed. Does not use thiosulfate as sulfur donor; nfs1 probably acting as a sulfur donor for thiocarboxylation reactions. The polypeptide is Adenylyltransferase and sulfurtransferase uba4 (Aspergillus fumigatus (strain ATCC MYA-4609 / CBS 101355 / FGSC A1100 / Af293) (Neosartorya fumigata)).